The following is a 574-amino-acid chain: Alpha-farnesene synthase (574 aa).

Mn(2+) contacts are provided by aspartate 326, aspartate 330, and glutamate 478. The DDXXD motif motif lies at 326 to 330; that stretch reads DDIYD.

Belongs to the terpene synthase family. Tpsd subfamily. Mn(2+) is required as a cofactor.

It localises to the cytoplasm. The catalysed reaction is (2E,6E)-farnesyl diphosphate = (3E,6E)-alpha-farnesene + diphosphate. The protein operates within terpene metabolism; oleoresin biosynthesis. Involved in sesquiterpene (C15) biosynthesis. The major product is alpha-farnesene. The sequence is that of Alpha-farnesene synthase (PT5) from Pinus taeda (Loblolly pine).